Consider the following 229-residue polypeptide: Probable coenzyme A transferase subunit alpha (229 aa).

26-32 (GGFGGVG) lines the CoA pocket.

The protein belongs to the 3-oxoacid CoA-transferase subunit A family. Heterodimer of a subunit alpha and a subunit beta.

In Bacillus subtilis (strain 168), this protein is Probable coenzyme A transferase subunit alpha (yodS).